We begin with the raw amino-acid sequence, 236 residues long: 6-carboxyhexanoate--CoA ligase (236 aa).

This sequence belongs to the BioW family. Homodimer. It depends on Mg(2+) as a cofactor.

It carries out the reaction heptanedioate + ATP + CoA = 6-carboxyhexanoyl-CoA + AMP + diphosphate. It functions in the pathway metabolic intermediate metabolism; pimeloyl-CoA biosynthesis; pimeloyl-CoA from pimelate: step 1/1. Catalyzes the transformation of pimelate into pimeloyl-CoA with concomitant hydrolysis of ATP to AMP. In Methanococcus aeolicus (strain ATCC BAA-1280 / DSM 17508 / OCM 812 / Nankai-3), this protein is 6-carboxyhexanoate--CoA ligase.